Consider the following 236-residue polypeptide: Putative lipoprotein MlpA (236 aa).

An N-terminal signal peptide occupies residues 1–21; the sequence is MTKNIVNTALVLVGAGSLLTG. Residue cysteine 22 is the site of N-palmitoyl cysteine attachment. Cysteine 22 carries the S-diacylglycerol cysteine lipid modification.

The protein resides in the cell membrane. The protein is Putative lipoprotein MlpA (mlpA) of Myxococcus xanthus.